We begin with the raw amino-acid sequence, 318 residues long: Nuclear egress protein 1 (318 aa).

The CCCH-type zinc finger occupies 129–239 (CLRLSPFGHS…HLLLQGTSLH (111 aa)).

Belongs to the herpesviridae NEC1 protein family. As to quaternary structure, forms a heterodimeric viral nuclear egress complex (NEC) with NEC2. Interacts with capsid vertex specific component 2/CVC2; this interaction directs the capsid to the host inner nuclear membrane to initiate budding. In terms of processing, phosphorylated at serine residues in the N-terminus. This phosphorylation regulates the localization within the inner nuclear membrane.

It localises to the host nucleus inner membrane. Functionally, plays an essential role in virion nuclear egress, the first step of virion release from infected cell. Within the host nucleus, NEC1 interacts with the newly formed capsid through the vertexes and directs it to the inner nuclear membrane by associating with NEC2. Induces the budding of the capsid at the inner nuclear membrane as well as its envelopment into the perinuclear space. There, the NEC1/NEC2 complex promotes the fusion of the enveloped capsid with the outer nuclear membrane and the subsequent release of the viral capsid into the cytoplasm where it will reach the secondary budding sites in the host Golgi or trans-Golgi network. This is Nuclear egress protein 1 from Homo sapiens (Human).